The following is a 504-amino-acid chain: Glucan endo-1,3-beta-glucosidase 7 (504 aa).

Positions 1-22 are cleaved as a signal peptide; sequence MALSISIYFLLIFLSHFPSSHA. E119 serves as the catalytic Proton donor. Catalysis depends on E264, which acts as the Nucleophile. Cysteines 365 and 427 form a disulfide.

This sequence belongs to the glycosyl hydrolase 17 family. Contains two additional disulfide bonds.

The protein resides in the secreted. The protein localises to the cell wall. It carries out the reaction Hydrolysis of (1-&gt;3)-beta-D-glucosidic linkages in (1-&gt;3)-beta-D-glucans.. In Arabidopsis thaliana (Mouse-ear cress), this protein is Glucan endo-1,3-beta-glucosidase 7.